The following is a 604-amino-acid chain: Putative O-acetyltransferase SAR0937 (604 aa).

11 consecutive transmembrane segments (helical) span residues Tyr-15–Leu-35, Gly-43–Leu-63, Leu-85–Ser-105, Ala-150–Ile-170, Ile-176–Ser-196, Leu-212–Asn-232, Tyr-240–Ile-260, Ile-267–Val-287, Tyr-310–Gly-330, Ile-332–Tyr-352, and Phe-377–Ala-397. Residues Ser-459, Asp-581, and His-584 contribute to the active site.

This sequence belongs to the acyltransferase 3 family.

It is found in the cell membrane. This chain is Putative O-acetyltransferase SAR0937, found in Staphylococcus aureus (strain MRSA252).